The following is a 156-amino-acid chain: Snaclec A4 (156 aa).

The signal sequence occupies residues 1–23 (MGRSISVSFGLLVVFLSLSGTGA). A disulfide bridge connects residues Cys-27 and Cys-38. In terms of domain architecture, C-type lectin spans 34 to 155 (HEGHCYKVFN…CGQPYRFTCE (122 aa)). An N-linked (GlcNAc...) asparagine glycan is attached at Asn-45. 2 cysteine pairs are disulfide-bonded: Cys-55–Cys-154 and Cys-129–Cys-146.

The protein belongs to the snaclec family. In terms of assembly, heterodimer; disulfide-linked. Expressed by the venom gland.

It is found in the secreted. Its function is as follows. Interferes with one step of hemostasis (modulation of platelet aggregation, or coagulation cascade, for example). The sequence is that of Snaclec A4 from Macrovipera lebetinus (Levantine viper).